Here is a 2223-residue protein sequence, read N- to C-terminus: Voltage-dependent T-type calcium channel subunit alpha-1I (2223 aa).

Low complexity predominate over residues 1–19 (MAESASPPSSSAAAPAAEP). Residues 1-46 (MAESASPPSSSAAAPAAEPGVTTEQPGPRSPPSSPPGLEEPLDGAD) are disordered. Over 1–78 (MAESASPPSS…RNWCIKMVCN (78 aa)) the chain is Cytoplasmic. An I repeat occupies 66–401 (TSPRNWCIKM…LCLVVIATQF (336 aa)). A helical membrane pass occupies residues 79-99 (PWFECVSMLVILLNCVTLGMY). The Extracellular portion of the chain corresponds to 100–120 (QPCDDMDCLSDRCKILQVFDD). A helical membrane pass occupies residues 121-141 (FIFIFFAMEMVLKMVALGIFG). Residues 142-148 (KKCYLGD) are Cytoplasmic-facing. A helical transmembrane segment spans residues 149-168 (TWNRLDFFIVMAGMVEYSLD). Topologically, residues 169 to 173 (LQNIN) are extracellular. Asn173 carries N-linked (GlcNAc...) asparagine glycosylation. A helical membrane pass occupies residues 174 to 191 (LSAIRTVRVLRPLKAINR). The Cytoplasmic portion of the chain corresponds to 192 to 211 (VPSMRILVNLLLDTLPMLGN). A helical transmembrane segment spans residues 212–232 (VLLLCFFVFFIFGIIGVQLWA). Residues 233 to 377 (GLLRNRCFLE…DAHSFYNFIY (145 aa)) lie on the Extracellular side of the membrane. N-linked (GlcNAc...) asparagine glycans are attached at residues Asn244 and Asn311. The chain crosses the membrane as a helical span at residues 378–398 (FILLIIVGSFFMINLCLVVIA). The Cytoplasmic segment spans residues 399–640 (TQFSETKQRE…AKLRGIVDSK (242 aa)). Disordered stretches follow at residues 467 to 536 (LGPE…ATPH) and 555 to 616 (CCQH…EQAD). The II repeat unit spans residues 626–865 (WRETRAKLRG…LLVAILVEGF (240 aa)). The chain crosses the membrane as a helical span at residues 641 to 661 (YFNRGIMMAILVNTVSMGIEH). The Extracellular portion of the chain corresponds to 662 to 676 (HEQPEELTNILEICN). A helical membrane pass occupies residues 677–697 (VVFTSMFALEMILKLAAFGLF). Residues 698–702 (DYLRN) are Cytoplasmic-facing. The helical transmembrane segment at 703–721 (PYNIFDSIIVIISIWEIVG) threads the bilayer. The Extracellular portion of the chain corresponds to 722 to 729 (QADGGLSV). A helical membrane pass occupies residues 730–753 (LRTFRLLRVLKLVRFMPALRRQLV). Over 754–764 (VLMKTMDNVAT) the chain is Cytoplasmic. A helical membrane pass occupies residues 765-785 (FCMLLMLFIFIFSILGMHIFG). Residues 786–841 (CKFSLRTDTGDTVPDRKNFDSLLWAIVTVFQILTQEDWNVVLYNGMASTSPWASLY) are Extracellular-facing. The helical transmembrane segment at 842–862 (FVALMTFGNYVLFNLLVAILV) threads the bilayer. Over 863-1166 (EGFQAEGDAN…NRFRVLCQTI (304 aa)) the chain is Cytoplasmic. The tract at residues 899–936 (GDPKLCPIPMTPNGHLDPSLPLGGHLGPAGAAGPAPRL) is disordered. Residues 912 to 936 (GHLDPSLPLGGHLGPAGAAGPAPRL) show a composition bias toward low complexity. Ser1058 is subject to Phosphoserine. Residues 1157-1434 (NRFRVLCQTI…MFVGVVVENF (278 aa)) form an III repeat. The helical transmembrane segment at 1167 to 1187 (IAHKLFDYVVLAFIFLNCITI) threads the bilayer. At 1188 to 1209 (ALERPQIEAGSTERIFLTVSNY) the chain is on the extracellular side. Residues 1210 to 1230 (IFTAIFVGEMTLKVVSLGLYF) traverse the membrane as a helical segment. Over 1231 to 1244 (GEQAYLRSSWNVLD) the chain is Cytoplasmic. Residues 1245–1265 (GFLVFVSIIDIVVSLASAGGA) traverse the membrane as a helical segment. Over 1266 to 1272 (KILGVLR) the chain is Extracellular. A helical membrane pass occupies residues 1273-1294 (VLRLLRTLRPLRVISRAPGLKL). At 1295–1304 (VVETLISSLK) the chain is on the cytoplasmic side. A helical transmembrane segment spans residues 1305-1325 (PIGNIVLICCAFFIIFGILGV). Over 1326-1410 (QLFKGKFYHC…TNHNPWMLLY (85 aa)) the chain is Extracellular. Residues Asn1342 and Asn1345 are each glycosylated (N-linked (GlcNAc...) asparagine). A helical transmembrane segment spans residues 1411 to 1431 (FISFLLIVSFFVLNMFVGVVV). Topologically, residues 1432–1485 (ENFHKCRQHQEAEEARRREEKRLRRLEKKRRKAQRLPYYATYCHTRLLIHSMCT) are cytoplasmic. The IV repeat unit spans residues 1472 to 1733 (TYCHTRLLIH…VVVAVLMKHL (262 aa)). The helical transmembrane segment at 1486-1506 (SHYLDIFITFIICLNVVTMSL) threads the bilayer. The Extracellular portion of the chain corresponds to 1507–1522 (EHYNQPTSLETALKYC). The chain crosses the membrane as a helical span at residues 1523 to 1543 (NYMFTTVFVLEAVLKLVAFGL). The Cytoplasmic segment spans residues 1544–1556 (RRFFKDRWNQLDL). The helical transmembrane segment at 1557–1577 (AIVLLSVMGITLEEIEINAAL) threads the bilayer. The Extracellular segment spans residues 1578–1583 (PINPTI). A helical membrane pass occupies residues 1584–1607 (IRIMRVLRIARVLKLLKMATGMRA). Residues 1608–1621 (LLDTVVQALPQVGN) lie on the Cytoplasmic side of the membrane. A helical membrane pass occupies residues 1622–1642 (LGLLFMLLFFIYAALGVELFG). The Extracellular portion of the chain corresponds to 1643–1709 (KLVCNDENPC…SSLQFVSPLY (67 aa)). A helical transmembrane segment spans residues 1710–1730 (FVSFVLTAQFVLINVVVAVLM). Over 1731-2223 (KHLDDSNKEA…PGDAASKRKR (493 aa)) the chain is Cytoplasmic. Disordered stretches follow at residues 1758-1784 (LGPG…GGGD), 1868-1897 (LGDD…PEPM), 1937-1960 (LKHD…LLPM), 2013-2062 (SDTS…LSPA), and 2076-2223 (SLRG…KRKR). Positions 1770-1784 (GAPGRGPGGAGGGGD) are enriched in gly residues. Low complexity predominate over residues 2013 to 2028 (SDTSLDASPSSSAGSL). Composition is skewed to polar residues over residues 2029–2040 (QTTLEDSLTLSD) and 2087–2096 (HSSGGSTSPG). Residues 2098–2111 (THHDSMDPSDEEGR) are compositionally biased toward basic and acidic residues. Residues 2126–2136 (TLSSLSLTSLF) show a composition bias toward low complexity. Residues 2137–2146 (CPPPPPPAPG) are compositionally biased toward pro residues. Residues 2160–2176 (AAPGRPHAAALAHGLAR) are compositionally biased toward low complexity.

This sequence belongs to the calcium channel alpha-1 subunit (TC 1.A.1.11) family. CACNA1I subfamily. In terms of assembly, interacts with CATSPER1 and CATSPER2, leading to suppress T-type calcium channel activity. In terms of processing, in response to raising of intracellular calcium, the T-type channels are activated by CaM-kinase II. Brain specific.

The protein resides in the membrane. The enzyme catalyses Ca(2+)(in) = Ca(2+)(out). Its function is as follows. Voltage-sensitive calcium channels (VSCC) mediate the entry of calcium ions into excitable cells and are also involved in a variety of calcium-dependent processes, including muscle contraction, hormone or neurotransmitter release, gene expression, cell motility, cell division and cell death. This channel gives rise to T-type calcium currents. T-type calcium channels belong to the 'low-voltage activated (LVA)' group and are strongly blocked by nickel and mibefradil. A particularity of this type of channels is an opening at quite negative potentials, and a voltage-dependent inactivation. T-type channels serve pacemaking functions in both central neurons and cardiac nodal cells and support calcium signaling in secretory cells and vascular smooth muscle. They may also be involved in the modulation of firing patterns of neurons which is important for information processing as well as in cell growth processes. Gates in voltage ranges similar to, but higher than alpha 1G or alpha 1H. Voltage-sensitive calcium channels (VSCC) mediate the entry of calcium ions into excitable cells and are also involved in a variety of calcium-dependent processes, including muscle contraction, hormone or neurotransmitter release, gene expression, cell motility, cell division and cell death. This channel gives rise to T-type calcium currents. This Homo sapiens (Human) protein is Voltage-dependent T-type calcium channel subunit alpha-1I (CACNA1I).